The sequence spans 202 residues: Dephospho-CoA kinase (202 aa).

Residues 3 to 202 enclose the DPCK domain; sequence IFGLTGGIGS…ISHRSKYLSC (200 aa). ATP is bound at residue 11-16; that stretch reads GSGKSL.

Belongs to the CoaE family.

Its subcellular location is the cytoplasm. The catalysed reaction is 3'-dephospho-CoA + ATP = ADP + CoA + H(+). It participates in cofactor biosynthesis; coenzyme A biosynthesis; CoA from (R)-pantothenate: step 5/5. Functionally, catalyzes the phosphorylation of the 3'-hydroxyl group of dephosphocoenzyme A to form coenzyme A. The protein is Dephospho-CoA kinase of Ehrlichia chaffeensis (strain ATCC CRL-10679 / Arkansas).